We begin with the raw amino-acid sequence, 348 residues long: Phosphate acyltransferase (348 aa).

This sequence belongs to the PlsX family. Homodimer. Probably interacts with PlsY.

It is found in the cytoplasm. It catalyses the reaction a fatty acyl-[ACP] + phosphate = an acyl phosphate + holo-[ACP]. It functions in the pathway lipid metabolism; phospholipid metabolism. In terms of biological role, catalyzes the reversible formation of acyl-phosphate (acyl-PO(4)) from acyl-[acyl-carrier-protein] (acyl-ACP). This enzyme utilizes acyl-ACP as fatty acyl donor, but not acyl-CoA. In Rhizobium rhizogenes (strain K84 / ATCC BAA-868) (Agrobacterium radiobacter), this protein is Phosphate acyltransferase.